A 583-amino-acid polypeptide reads, in one-letter code: Radixin (583 aa).

Residues 5-295 (INVRVTTMDA…GNHELYMRRR (291 aa)) form the FERM domain. 60-63 (KLNK) provides a ligand contact to a 1,2-diacyl-sn-glycero-3-phospho-(1D-myo-inositol). K83 carries the post-translational modification N6-succinyllysine. An a 1,2-diacyl-sn-glycero-3-phospho-(1D-myo-inositol)-binding site is contributed by K278. Disordered regions lie at residues 310-330 (REEK…KKKR), 376-407 (DQER…AKQA), and 462-526 (ELKT…RVKK). Positions 376 to 400 (DQERKRAKEEAERLEKERRAAEEAK) are enriched in basic and acidic residues. Residues 469–480 (APPPPPPPPVIP) show a composition bias toward pro residues. Composition is skewed to basic and acidic residues over residues 483–492 (ENEHDEHDEN) and 506–525 (MNHR…ERVK). T564 is subject to Phosphothreonine; by ROCK2.

Binds NHERF1. Interacts with NHERF1, NHERF2, LAYN, MME/NEP and ICAM2. Interacts with CPNE1 (via VWFA domain) and CPNE4 (via VWFA domain). Interacts (via FERM domain) with SPN/CD43 cytoplasmic tail. Interacts with CD44. Interacts with CLIC5; may work together in a complex which also includes EZR and MYO6 to stabilize linkages between the plasma membrane and subjacent actin cytoskeleton at the base of stereocilia. Post-translationally, phosphorylated by tyrosine-protein kinases. Phosphorylation by ROCK2 suppresses the head-to-tail association of the N-terminal and C-terminal halves resulting in an opened conformation which is capable of actin and membrane-binding.

The protein resides in the cell membrane. The protein localises to the cytoplasm. Its subcellular location is the cytoskeleton. It localises to the cleavage furrow. It is found in the cell projection. The protein resides in the microvillus. The protein localises to the stereocilium. A head-to-tail association, of the N-terminal and C-terminal halves results in a closed conformation (inactive form) which is incapable of actin or membrane-binding. Its function is as follows. Probably plays a crucial role in the binding of the barbed end of actin filaments to the plasma membrane. This Homo sapiens (Human) protein is Radixin (RDX).